The chain runs to 765 residues: FHF complex subunit HOOK interacting protein 2A (765 aa).

Disordered regions lie at residues 193 to 236 (TLKG…DHLS) and 532 to 561 (TDIS…KNDG). Polar residues-rich tracts occupy residues 196 to 208 (GQDS…GQSR) and 535 to 550 (SPEN…SSSP).

Belongs to the FHIP family. As to expression, expressed in all tissues tested, highly expressed brain. Only detected at high levels in testis.

In terms of biological role, required for proper functioning of the nervous system. The protein is FHF complex subunit HOOK interacting protein 2A of Homo sapiens (Human).